The primary structure comprises 208 residues: AN1-type zinc finger protein 6 (208 aa).

Residues 8–42 (SQVPMLCSTGCGFYGNPRTNGMCSVCYKEHLQRQN) form an A20-type zinc finger. Residues Cys14, Cys18, Cys30, and Cys33 each contribute to the Zn(2+) site. The tract at residues 41-110 (QNSSNGRISP…ASSQVDSTSV (70 aa)) is disordered. The residue at position 49 (Ser49) is a Phosphoserine. Over residues 54–68 (SVTSLSESLPVQCTD) the composition is skewed to polar residues. Residues 83–94 (SSVQPSPVSNQS) show a composition bias toward low complexity. Polar residues predominate over residues 95–110 (LLSESVASSQVDSTSV). The AN1-type zinc-finger motif lies at 143 to 189 (KQKKNRCFMCRKKVGLTGFECRCGNVYCGVHRYSDVHNCSYNYKADA). Positions 149, 152, 163, 165, 170, 173, 179, and 181 each coordinate Zn(2+). An N6-acetyllysine modification is found at Lys204.

Interacts with PKN1.

The protein is AN1-type zinc finger protein 6 (ZFAND6) of Bos taurus (Bovine).